The sequence spans 132 residues: Profilin-1 (132 aa).

The protein belongs to the profilin family. As to quaternary structure, occurs in many kinds of cells as a complex with monomeric actin in a 1:1 ratio.

Its subcellular location is the cytoplasm. The protein resides in the cytoskeleton. In terms of biological role, binds to actin and affects the structure of the cytoskeleton. At high concentrations, profilin prevents the polymerization of actin, whereas it enhances it at low concentrations. By binding to PIP2, it inhibits the formation of IP3 and DG. The polypeptide is Profilin-1 (PRO1) (Parietaria judaica (Pellitory-of-the-wall)).